The chain runs to 243 residues: Small ribosomal subunit protein uS3 (243 aa).

Positions 39-110 constitute a KH type-2 domain; that stretch reads IRVFIQKKYG…QVRINVVEIE (72 aa). Positions 216-243 are disordered; the sequence is QPLPVGASPRRKGNRRPQQFEDRSNDGK. A compositionally biased stretch (basic and acidic residues) spans 233-243; that stretch reads QQFEDRSNDGK.

Belongs to the universal ribosomal protein uS3 family. As to quaternary structure, part of the 30S ribosomal subunit. Forms a tight complex with proteins S10 and S14.

Its function is as follows. Binds the lower part of the 30S subunit head. Binds mRNA in the 70S ribosome, positioning it for translation. This Prochlorococcus marinus (strain SARG / CCMP1375 / SS120) protein is Small ribosomal subunit protein uS3.